The following is a 157-amino-acid chain: Globin (157 aa).

Position 1 is an N-acetylglycine (glycine 1). Residues 8–155 form the Globin domain; it reads SLSADQKAAI…MANIIDAEQK (148 aa). Residues histidine 70 and histidine 102 each coordinate heme b.

It belongs to the globin family. In terms of assembly, monomer.

The protein is Globin of Nerita albicilla (Ox-palate nerite).